A 494-amino-acid polypeptide reads, in one-letter code: UDP-glucose 6-dehydrogenase (494 aa).

NAD(+)-binding positions include 11-16, aspartate 36, arginine 41, and 89-93; these read GAGYVG and VNTPT. The segment at 88–110 is disordered; it reads SVNTPTKTYGMGKGRAADLKYIE. N6-acetyllysine is present on lysine 107. An allosteric switch region region spans residues 129 to 135; the sequence is KSTVPVR. 130–132 is a binding site for NAD(+); sequence STV. Glutamate 161 acts as the Proton donor/acceptor in catalysis. Residues 161–165, 220–224, arginine 260, and 267–273 contribute to the substrate site; these read EFLAE, KLAAN, and KASVGFG. Glutamate 165 provides a ligand contact to NAD(+). Lysine 220 functions as the Proton donor/acceptor in the catalytic mechanism. Residue cysteine 276 is the Nucleophile of the active site. Residue 276-279 participates in NAD(+) binding; sequence CFQK. The tract at residues 321 to 325 is important for formation of active hexamer structure; it reads SLFNT. Residue 338–339 coordinates substrate; sequence FK. Arginine 346 lines the NAD(+) pocket. Arginine 442 is a binding site for substrate. The segment at 466-494 is disordered; sequence VSSKRIPYAPSGEIPKFSLQDPPNKKPKV. Position 476 is a phosphoserine (serine 476).

Belongs to the UDP-glucose/GDP-mannose dehydrogenase family. Homohexamer.

It carries out the reaction UDP-alpha-D-glucose + 2 NAD(+) + H2O = UDP-alpha-D-glucuronate + 2 NADH + 3 H(+). It functions in the pathway nucleotide-sugar biosynthesis; UDP-alpha-D-glucuronate biosynthesis; UDP-alpha-D-glucuronate from UDP-alpha-D-glucose: step 1/1. With respect to regulation, UDP-alpha-D-xylose (UDX) acts as a feedback inhibitor. It binds at the same site as the substrate, but functions as allosteric inhibitor by triggering a conformation change that disrupts the active hexameric ring structure and gives rise to an inactive, horseshoe-shaped hexamer. Functionally, catalyzes the formation of UDP-alpha-D-glucuronate, a constituent of complex glycosaminoglycans. Required for the biosynthesis of chondroitin sulfate and heparan sulfate. Required for embryonic development via its role in the biosynthesis of glycosaminoglycans. Required for proper brain and neuronal development. This is UDP-glucose 6-dehydrogenase (UGDH) from Pongo abelii (Sumatran orangutan).